The primary structure comprises 234 residues: MRIIVADCCAEYTGRLSASLPLAKRVLLIKADNSLLIFSEIGSYKPLNWMLSPCTIKDITPQDADDDPATPTPEKIIRVQSTKTNDVLEVTLQHIYSDETHDLGTDPGLRKDGVEDHLQRYLAEQIERIGEGAKLVRREYPTAIGPVDIMAIDADGTHVAIEIKRHGGIDGVEQLTRYCELLNRDPLLAPVRGIFAAQTITPQAQVLAKDRGFDCLLLDYDDMKGTDDGALRLF.

It belongs to the NucS endonuclease family.

It localises to the cytoplasm. Functionally, cleaves both 3' and 5' ssDNA extremities of branched DNA structures. In Bifidobacterium animalis subsp. lactis (strain AD011), this protein is Endonuclease NucS.